Here is a 348-residue protein sequence, read N- to C-terminus: Dihydroorotase (348 aa).

His17 and His19 together coordinate Zn(2+). Substrate is bound by residues 19 to 21 and Asn45; that span reads HLR. Zn(2+) is bound by residues Lys103, His140, and His178. Residue Lys103 is modified to N6-carboxylysine. His140 provides a ligand contact to substrate. Leu223 contributes to the substrate binding site. Position 251 (Asp251) interacts with Zn(2+). Asp251 is a catalytic residue. Substrate contacts are provided by His255 and Ala267.

It belongs to the metallo-dependent hydrolases superfamily. DHOase family. Class II DHOase subfamily. Homodimer. Zn(2+) is required as a cofactor.

The catalysed reaction is (S)-dihydroorotate + H2O = N-carbamoyl-L-aspartate + H(+). The protein operates within pyrimidine metabolism; UMP biosynthesis via de novo pathway; (S)-dihydroorotate from bicarbonate: step 3/3. Catalyzes the reversible cyclization of carbamoyl aspartate to dihydroorotate. The protein is Dihydroorotase of Salmonella arizonae (strain ATCC BAA-731 / CDC346-86 / RSK2980).